Consider the following 445-residue polypeptide: Cytochrome b (445 aa).

Residues 2 to 49 (SGIPHDHYEPRTGIEKWLHSRLPIVALAYDTIMIPTPRNLNWMWIWGV) are Cytoplasmic-facing. Residues 50-67 (VLAFCLVLQIVTGIVLAM) form a helical membrane-spanning segment. The Periplasmic segment spans residues 68–94 (HYTPHVDLAFASVEHIMRNVNGGFMLR). Residues 95-113 (YLHANGASLFFIAVYLHIF) traverse the membrane as a helical segment. Residues histidine 97 and histidine 111 each coordinate heme b. Over 114 to 129 (RGLYYGSYKAPREVTW) the chain is Cytoplasmic. The chain crosses the membrane as a helical span at residues 130–149 (IVGMLIYLAMMATAFMGYVL). The Periplasmic segment spans residues 150–193 (PWGQMSFWGATVITGLFGAIPGIGHSIQTWLLGGPAVDNATLNR). A helical transmembrane segment spans residues 194–216 (FFSLHYLLPFVIAALVAIHIWAF). Histidine 198 and histidine 212 together coordinate heme b. At 217 to 252 (HSTGNNNPTGVEVRRTSKAEAQKDTVPFWPYFIIKD) the chain is on the cytoplasmic side. The chain crosses the membrane as a helical span at residues 253–270 (VFALAVVLLVFFAIVGFM). Over 271–329 (PNYLGHPDNYIEANPLSTPAHIVPEWYFLPFYAILRAFTADVWVVQIANFISFGIIDAK) the chain is Periplasmic. The chain crosses the membrane as a helical span at residues 330–346 (FFGVLAMFGAILVMALV). The Cytoplasmic segment spans residues 347-364 (PWLDTSPVRSGRYRPMFK). The helical transmembrane segment at 365-382 (IYFWLLAADFVILTWVGA) threads the bilayer. The Periplasmic segment spans residues 383-388 (QQTTFP). Residues 389 to 408 (YDWISLIASAYWFAYFLVIL) form a helical membrane-spanning segment. Over 409–445 (PILGAIEKPVAPPATIEEDFNAHYSPATGGTKTVVAE) the chain is Cytoplasmic.

This sequence belongs to the cytochrome b family. As to quaternary structure, the main subunits of complex b-c1 are: cytochrome b, cytochrome c1 and the Rieske protein. The cofactor is heme b.

The protein localises to the cell membrane. Functionally, component of the ubiquinol-cytochrome c reductase complex (complex III or cytochrome b-c1 complex), which is a respiratory chain that generates an electrochemical potential coupled to ATP synthesis. The protein is Cytochrome b (petB) of Cereibacter sphaeroides (Rhodobacter sphaeroides).